A 190-amino-acid polypeptide reads, in one-letter code: Natural killer cells antigen CD94 (190 aa).

The Cytoplasmic segment spans residues 1-10 (MAAFRTTAWR). Residues 11–31 (LISGVLGVICLVLMAALGVLL) form a helical; Signal-anchor for type II membrane protein membrane-spanning segment. Over 32–190 (KNSLTKRSVQ…FRYICKQQLI (159 aa)) the chain is Extracellular. 4 disulfide bridges follow: C69–C81, C72–C83, C100–C185, and C163–C177. The 108-residue stretch at 79-186 (YQCNCYFISN…CEKKFRYICK (108 aa)) folds into the C-type lectin domain. 2 N-linked (GlcNAc...) asparagine glycosylation sites follow: N104 and N144.

Can form disulfide-bonded heterodimer with NKG2 family members KLRC1 and KLRC2. KLRD1-KLRC1 heterodimer interacts with peptide-bound MHC-E-B2M heterotrimeric complex. KLRD1 plays a prominent role in directly interacting with MHC-E. KLRD1-KLRC1 interacts with much higher affinity with peptide-bound MHC-E-B2M than KLRD1-KLRC2. Interacts with the adapter protein TYROBP/DAP12; this interaction is required for cell surface expression and cell activation.

Its subcellular location is the cell membrane. In terms of biological role, immune receptor involved in self-nonself discrimination. In complex with KLRC1 or KLRC2 on cytotoxic and regulatory lymphocyte subsets, recognizes non-classical major histocompatibility (MHC) class Ib molecule MHC-E loaded with self-peptides derived from the signal sequence of classical MHC class Ia and non-classical MHC class Ib molecules. Enables cytotoxic cells to monitor the expression of MHC class I molecules in healthy cells and to tolerate self. Primarily functions as a ligand binding subunit as it lacks the capacity to signal. Its function is as follows. KLRD1-KLRC1 acts as an immune inhibitory receptor. Key inhibitory receptor on natural killer (NK) cells that regulates their activation and effector functions. Dominantly counteracts T cell receptor signaling on a subset of memory/effector CD8-positive T cells as part of an antigen-driven response to avoid autoimmunity. On intraepithelial CD8-positive gamma-delta regulatory T cells triggers TGFB1 secretion, which in turn limits the cytotoxic programming of intraepithelial CD8-positive alpha-beta T cells, distinguishing harmless from pathogenic antigens. In MHC-E-rich tumor microenvironment, acts as an immune inhibitory checkpoint and may contribute to progressive loss of effector functions of NK cells and tumor-specific T cells, a state known as cell exhaustion. Upon MHC-E-peptide binding, transmits intracellular signals through KLRC1 immunoreceptor tyrosine-based inhibition motifs (ITIMs) by recruiting INPP5D/SHIP-1 and INPPL1/SHIP-2 tyrosine phosphatases to ITIMs, and ultimately opposing signals transmitted by activating receptors through dephosphorylation of proximal signaling molecules. Functionally, KLRD1-KLRC2 acts as an immune activating receptor. On cytotoxic lymphocyte subsets recognizes MHC-E loaded with signal sequence-derived peptides from non-classical MHC class Ib MHC-G molecules, likely playing a role in the generation and effector functions of adaptive NK cells and in maternal-fetal tolerance during pregnancy. Regulates the effector functions of terminally differentiated cytotoxic lymphocyte subsets, and in particular may play a role in adaptive NK cell response to viral infection. Upon MHC-E-peptide binding, transmits intracellular signals via the adapter protein TYROBP/DAP12, triggering the phosphorylation of proximal signaling molecules and cell activation. In Bos taurus (Bovine), this protein is Natural killer cells antigen CD94 (KLRD1).